An 876-amino-acid polypeptide reads, in one-letter code: Alanine--tRNA ligase (876 aa).

N6-acetyllysine is present on K74. Zn(2+)-binding residues include H564, H568, C666, and H670.

The protein belongs to the class-II aminoacyl-tRNA synthetase family. In terms of assembly, homotetramer. The cofactor is Zn(2+).

It localises to the cytoplasm. It carries out the reaction tRNA(Ala) + L-alanine + ATP = L-alanyl-tRNA(Ala) + AMP + diphosphate. Functionally, catalyzes the attachment of alanine to tRNA(Ala) in a two-step reaction: alanine is first activated by ATP to form Ala-AMP and then transferred to the acceptor end of tRNA(Ala). Also edits incorrectly charged Ser-tRNA(Ala) and Gly-tRNA(Ala) via its editing domain. This Shigella flexneri serotype 5b (strain 8401) protein is Alanine--tRNA ligase.